The following is a 386-amino-acid chain: Succinyl-diaminopimelate desuccinylase (386 aa).

Zn(2+) is bound at residue His-75. The active site involves Asp-77. Asp-108 contributes to the Zn(2+) binding site. Catalysis depends on Glu-138, which acts as the Proton acceptor. Glu-139, Glu-167, and His-356 together coordinate Zn(2+).

It belongs to the peptidase M20A family. DapE subfamily. Homodimer. It depends on Zn(2+) as a cofactor. The cofactor is Co(2+).

It catalyses the reaction N-succinyl-(2S,6S)-2,6-diaminopimelate + H2O = (2S,6S)-2,6-diaminopimelate + succinate. It functions in the pathway amino-acid biosynthesis; L-lysine biosynthesis via DAP pathway; LL-2,6-diaminopimelate from (S)-tetrahydrodipicolinate (succinylase route): step 3/3. Catalyzes the hydrolysis of N-succinyl-L,L-diaminopimelic acid (SDAP), forming succinate and LL-2,6-diaminopimelate (DAP), an intermediate involved in the bacterial biosynthesis of lysine and meso-diaminopimelic acid, an essential component of bacterial cell walls. This Caulobacter vibrioides (strain ATCC 19089 / CIP 103742 / CB 15) (Caulobacter crescentus) protein is Succinyl-diaminopimelate desuccinylase.